Reading from the N-terminus, the 189-residue chain is dCTP deaminase (189 aa).

DCTP contacts are provided by residues 112-117 (KSTYAR), 136-138 (TLE), Q157, Y171, and Q181. The active-site Proton donor/acceptor is the E138.

The protein belongs to the dCTP deaminase family. In terms of assembly, homotrimer.

The enzyme catalyses dCTP + H2O + H(+) = dUTP + NH4(+). Its pathway is pyrimidine metabolism; dUMP biosynthesis; dUMP from dCTP (dUTP route): step 1/2. In terms of biological role, catalyzes the deamination of dCTP to dUTP. The chain is dCTP deaminase from Methylacidiphilum infernorum (isolate V4) (Methylokorus infernorum (strain V4)).